The sequence spans 134 residues: Translation initiation factor 2 subunit beta (134 aa).

This sequence belongs to the eIF-2-beta/eIF-5 family. As to quaternary structure, heterotrimer composed of an alpha, a beta and a gamma chain.

Functionally, eIF-2 functions in the early steps of protein synthesis by forming a ternary complex with GTP and initiator tRNA. This Pyrobaculum arsenaticum (strain DSM 13514 / JCM 11321 / PZ6) protein is Translation initiation factor 2 subunit beta.